A 260-amino-acid polypeptide reads, in one-letter code: CD40 ligand (260 aa).

The Cytoplasmic portion of the chain corresponds to 1 to 22; that stretch reads MIETYSQTAPRSVAPGPPVSMK. A helical; Signal-anchor for type II membrane protein transmembrane segment spans residues 23 to 46; that stretch reads IFMYLLTVFLITQMIGSALFAVYL. The Extracellular portion of the chain corresponds to 47–260; the sequence is HRRLDKIEDE…GFTSFGLLKL (214 aa). A THD domain is found at 121–260; that stretch reads VAAHVISEAS…GFTSFGLLKL (140 aa). A disulfide bond links Cys177 and Cys217. Residue Asn239 is glycosylated (N-linked (GlcNAc...) asparagine).

This sequence belongs to the tumor necrosis factor family. Homotrimer. Interacts with CD28. CD40 ligand, soluble form: Exists as either a monomer or a homotrimer. Forms a ternary complex between CD40 and integrins for CD40-CD40LG signaling. In terms of processing, the soluble form derives from the membrane form by proteolytic processing.

It is found in the cell membrane. The protein localises to the cell surface. It localises to the secreted. In terms of biological role, cytokine that acts as a ligand to CD40/TNFRSF5. Costimulates T-cell proliferation and cytokine production. Its cross-linking on T-cells generates a costimulatory signal which enhances the production of IL4 and IL10 in conjunction with the TCR/CD3 ligation and CD28 costimulation. Induces the activation of NF-kappa-B. Induces the activation of kinases MAPK8 and PAK2 in T-cells. Mediates B-cell proliferation in the absence of co-stimulus as well as IgE production in the presence of IL4. Involved in immunoglobulin class switching. Functionally, acts as a ligand for integrins, specifically ITGA5:ITGB1 and ITGAV:ITGB3; both integrins and the CD40 receptor are required for activation of CD40-CD40LG signaling, which have cell-type dependent effects, such as B-cell activation, NF-kappa-B signaling and anti-apoptotic signaling. The protein is CD40 ligand (CD40LG) of Felis catus (Cat).